Reading from the N-terminus, the 3302-residue chain is Xin actin-binding repeat-containing protein 2 (3302 aa).

The interval 166 to 204 (NDSEETLKPSSAMGTSSYTSARQSKETSTSSYSNHSLTS) is disordered. A compositionally biased stretch (polar residues) spans 173–187 (KPSSAMGTSSYTSAR). Over residues 191–204 (ETSTSSYSNHSLTS) the composition is skewed to low complexity. Xin repeat units lie at residues 306-321 (AGVQ…TNDS), 341-356 (GEVQ…QPLD), 381-396 (GDVK…QPID), 418-433 (GDVC…RPLD), 456-471 (GDVK…QQLD), 496-511 (GNVK…QPLY), and 534-549 (GDVR…QPLD). Residue S565 is modified to Phosphoserine. Xin repeat units lie at residues 572-587 (GEVG…QPLE) and 606-621 (IDVS…QPLD). S633 bears the Phosphoserine mark. 5 Xin repeats span residues 640–655 (GDVK…LPIE), 677–692 (GDVK…QRLE), 713–728 (GHVK…NNLI), 744–759 (GTVE…TPLY), and 782–797 (GDVR…RPID). Phosphoserine is present on S813. 11 Xin repeats span residues 820–835 (GNVK…QPLD), 859–874 (GDVK…QPME), 892–907 (GDVR…QPLD), 930–945 (GDVR…ENLD), 965–980 (GDVS…QSLD), 1004–1019 (GNVL…QPID), 1040–1055 (GDVR…FSLD), 1077–1092 (GDVK…QPLY), 1115–1130 (GDVR…KPLD), 1152–1167 (GDVS…QPLD), and 1186–1201 (GNVQ…EGGD). S1210 is subject to Phosphoserine. 3 Xin repeats span residues 1217 to 1232 (GNVK…HSID), 1254 to 1269 (GDVK…QTLD), and 1289 to 1304 (SDVK…TPIH). S1573 is modified (phosphoserine). Disordered regions lie at residues 1848–1882 (VSAS…VDKT), 1920–1939 (AETQ…NPAG), 1957–2002 (EKQN…APDK), 2039–2296 (YPDC…KPYM), 2311–2378 (RQQR…SKAV), 2546–2593 (YAAK…ESRV), and 2626–2687 (NFQQ…RESQ). Positions 1859–1873 (KTKESENVRESKDDV) are enriched in basic and acidic residues. At T1930 the chain carries Phosphothreonine. Position 1935 is a phosphoserine (S1935). Over residues 1957–1969 (EKQNSNKDMRKND) the composition is skewed to basic and acidic residues. Pro residues-rich tracts occupy residues 2051–2062 (LPPPSPPPPPPS) and 2125–2134 (SLPPPPPTAP). Positions 2135–2145 (SQPAHLLSSSV) are enriched in low complexity. S2158 carries the post-translational modification Phosphoserine. A compositionally biased stretch (basic and acidic residues) spans 2158-2167 (SRKETLDSHQ). The interval 2181-2186 (PPTLPK) is interacts with NEBL. Phosphoserine is present on residues S2198, S2211, and S2252. The span at 2205–2243 (ELERSLSDVEIKTTLSKDQKSSLVAESREHTEAKQEVFR) shows a compositional bias: basic and acidic residues. 2 stretches are compositionally biased toward polar residues: residues 2251 to 2263 (LSIS…SQTV) and 2282 to 2292 (SFPSGSEQQSP). A coiled-coil region spans residues 2303-2328 (LMIAEEKYRQQREELEKQRRESSCHS). Basic and acidic residues-rich tracts occupy residues 2311 to 2325 (RQQR…RESS) and 2333 to 2350 (ETQH…ELQK). The segment covering 2626-2635 (NFQQTQTQTS) has biased composition (polar residues). A compositionally biased stretch (basic and acidic residues) spans 2636 to 2659 (RIEHKELSQPYSEKKCLRDKDKQQ). The segment covering 2674–2685 (TQKQSSFSSVRE) has biased composition (polar residues). Coiled-coil stretches lie at residues 2696–2724 (NILE…SNKS) and 2751–2777 (RVAM…EMLV). The tract at residues 2835 to 2934 (RQVATHSEAA…PSPPRSRSEQ (100 aa)) is disordered. Composition is skewed to polar residues over residues 2836–2850 (QVAT…NPAK) and 2891–2903 (KSEL…NNSC). The segment covering 2907 to 2916 (LPRRPMEHTS) has biased composition (basic and acidic residues). Phosphoserine is present on residues S2987 and S3225. A disordered region spans residues 3278–3302 (QGNLHNLSKDGLSNGVPRSRPAEFS).

Belongs to the Xin family. As to quaternary structure, interacts with ACTN2. Interacts with F-actin. Interacts with NEBL (via SH3 domain). Interacts with Kcna5/Kv1.5 and Scn5a/Nav1.5; the interactions are required for normal action potential configuration in the heart.

It localises to the cell junction. In terms of biological role, protects actin filaments from depolymerization. Required for correct morphology of cell membranes and maturation of intercalated disks of cardiomyocytes via facilitating localization of XIRP1 and CDH2 to the termini of aligned mature cardiomyocytes. Thereby required for correct postnatal heart development and growth regulation that is crucial for overall heart morphology and diastolic function. Required for normal electrical conduction in the heart including formation of the infranodal ventricular conduction system and normal action potential configuration, as a result of its interaction with the cardiac ion channel components Scn5a/Nav1.5 and Kcna5/Kv1.5. Required for regular actin filament spacing of the paracrystalline array in both inner and outer hair cells of the cochlea, thereby required for maintenance of stereocilia morphology. The chain is Xin actin-binding repeat-containing protein 2 from Rattus norvegicus (Rat).